The chain runs to 487 residues: DNA ligase (487 aa).

The active-site N6-AMP-lysine intermediate is the Lys159. Residues Arg164, Arg182, and Glu217 each contribute to the ATP site. Glu217 contributes to the a divalent metal cation binding site. Positions 229 to 237 (EGLDFLFDA) are interaction with the sliding clamp. Glu344 serves as a coordination point for a divalent metal cation. Positions 359 and 365 each coordinate ATP.

This sequence belongs to the ATP-dependent DNA ligase family. In terms of assembly, interacts with the sliding clamp. A divalent metal cation is required as a cofactor.

It carries out the reaction ATP + (deoxyribonucleotide)n-3'-hydroxyl + 5'-phospho-(deoxyribonucleotide)m = (deoxyribonucleotide)n+m + AMP + diphosphate.. Functionally, DNA ligase, which is expressed in the early stage of lytic development, has been implicated in T4 DNA synthesis and genetic recombination. It may also play a role in T4 DNA repair. The chain is DNA ligase (30) from Escherichia coli (Bacteriophage T6).